Here is a 705-residue protein sequence, read N- to C-terminus: Effector protein AvrPphDPsv (705 aa).

Polar residues predominate over residues 1–15; that stretch reads MNPLQSIQHNITTPP. Disordered stretches follow at residues 1–40 and 175–205; these read MNPL…ISPS and RLET…RRES.

The protein resides in the secreted. Functionally, effector protein involved in non-host recognition. This Pseudomonas savastanoi (Pseudomonas syringae pv. savastanoi) protein is Effector protein AvrPphDPsv (avrPphDPsv).